Consider the following 83-residue polypeptide: Small ribosomal subunit protein bS16 (83 aa).

The protein belongs to the bacterial ribosomal protein bS16 family.

The sequence is that of Small ribosomal subunit protein bS16 from Pseudoalteromonas atlantica (strain T6c / ATCC BAA-1087).